A 117-amino-acid polypeptide reads, in one-letter code: MNNIIKMLNDEQMKQDVPAFGAGDTVVVQVRVKEGDKERLQAFEGVVIAKRNRGLHSAFTVRKISNGEGVERAFQTHSPLIASIEVKRRGRVRRAKLYYLRDRSGKSARIREKLATK.

The protein belongs to the bacterial ribosomal protein bL19 family.

Functionally, this protein is located at the 30S-50S ribosomal subunit interface and may play a role in the structure and function of the aminoacyl-tRNA binding site. The polypeptide is Large ribosomal subunit protein bL19 (Shewanella baltica (strain OS155 / ATCC BAA-1091)).